The following is a 347-amino-acid chain: N-acetyl-gamma-glutamyl-phosphate reductase (347 aa).

Cys151 is a catalytic residue.

This sequence belongs to the NAGSA dehydrogenase family. Type 1 subfamily.

It is found in the cytoplasm. The catalysed reaction is N-acetyl-L-glutamate 5-semialdehyde + phosphate + NADP(+) = N-acetyl-L-glutamyl 5-phosphate + NADPH + H(+). It participates in amino-acid biosynthesis; L-arginine biosynthesis; N(2)-acetyl-L-ornithine from L-glutamate: step 3/4. In terms of biological role, catalyzes the NADPH-dependent reduction of N-acetyl-5-glutamyl phosphate to yield N-acetyl-L-glutamate 5-semialdehyde. This chain is N-acetyl-gamma-glutamyl-phosphate reductase, found in Corynebacterium diphtheriae (strain ATCC 700971 / NCTC 13129 / Biotype gravis).